A 616-amino-acid polypeptide reads, in one-letter code: Chaperone protein HscA (616 aa).

The protein belongs to the heat shock protein 70 family.

In terms of biological role, chaperone involved in the maturation of iron-sulfur cluster-containing proteins. Has a low intrinsic ATPase activity which is markedly stimulated by HscB. Involved in the maturation of IscU. The protein is Chaperone protein HscA of Escherichia fergusonii (strain ATCC 35469 / DSM 13698 / CCUG 18766 / IAM 14443 / JCM 21226 / LMG 7866 / NBRC 102419 / NCTC 12128 / CDC 0568-73).